The sequence spans 342 residues: Phosphate acyltransferase (342 aa).

This sequence belongs to the PlsX family. In terms of assembly, homodimer. Probably interacts with PlsY.

It is found in the cytoplasm. It carries out the reaction a fatty acyl-[ACP] + phosphate = an acyl phosphate + holo-[ACP]. It functions in the pathway lipid metabolism; phospholipid metabolism. In terms of biological role, catalyzes the reversible formation of acyl-phosphate (acyl-PO(4)) from acyl-[acyl-carrier-protein] (acyl-ACP). This enzyme utilizes acyl-ACP as fatty acyl donor, but not acyl-CoA. In Legionella pneumophila (strain Paris), this protein is Phosphate acyltransferase.